Here is an 839-residue protein sequence, read N- to C-terminus: Lon protease (839 aa).

Residues 31–224 (LFLIPIKSRP…KVLLFLKKEI (194 aa)) form the Lon N-terminal domain. 377-384 (GPPGVGKT) contacts ATP. A Lon proteolytic domain is found at 613–790 (ASVPGTALGL…EEVALLLFDE (178 aa)). Active-site residues include Ser-696 and Lys-739. The disordered stretch occupies residues 807 to 839 (IVNPTRKLSPKKKTTQKQKLSLSKQKGNNQKKK). A compositionally biased stretch (low complexity) spans 823–832 (KQKLSLSKQK).

The protein belongs to the peptidase S16 family. In terms of assembly, homohexamer. Organized in a ring with a central cavity.

The protein resides in the cytoplasm. The catalysed reaction is Hydrolysis of proteins in presence of ATP.. ATP-dependent serine protease that mediates the selective degradation of mutant and abnormal proteins as well as certain short-lived regulatory proteins. Required for cellular homeostasis and for survival from DNA damage and developmental changes induced by stress. Degrades polypeptides processively to yield small peptide fragments that are 5 to 10 amino acids long. Binds to DNA in a double-stranded, site-specific manner. The polypeptide is Lon protease (Leptospira interrogans serogroup Icterohaemorrhagiae serovar copenhageni (strain Fiocruz L1-130)).